Consider the following 344-residue polypeptide: tRNA(Ile)-lysidine synthase (344 aa).

43-48 (SGGADS) provides a ligand contact to ATP.

It belongs to the tRNA(Ile)-lysidine synthase family.

It is found in the cytoplasm. The enzyme catalyses cytidine(34) in tRNA(Ile2) + L-lysine + ATP = lysidine(34) in tRNA(Ile2) + AMP + diphosphate + H(+). Its function is as follows. Ligates lysine onto the cytidine present at position 34 of the AUA codon-specific tRNA(Ile) that contains the anticodon CAU, in an ATP-dependent manner. Cytidine is converted to lysidine, thus changing the amino acid specificity of the tRNA from methionine to isoleucine. This Bordetella bronchiseptica (strain ATCC BAA-588 / NCTC 13252 / RB50) (Alcaligenes bronchisepticus) protein is tRNA(Ile)-lysidine synthase.